A 137-amino-acid chain; its full sequence is Diacylglycerol kinase (137 aa).

Glu42 is a binding site for a divalent metal cation. Helical transmembrane passes span 49-67 (LIAF…ATFF) and 73-89 (AILF…NTAI). Glu83 functions as the Proton acceptor in the catalytic mechanism. A divalent metal cation is bound at residue Glu90. The chain crosses the membrane as a helical span at residues 112–132 (SFACLCLIVANGVYAAYVVIF).

The protein belongs to the bacterial diacylglycerol kinase family. Mg(2+) serves as cofactor.

The protein resides in the cell inner membrane. It carries out the reaction a 1,2-diacyl-sn-glycerol + ATP = a 1,2-diacyl-sn-glycero-3-phosphate + ADP + H(+). Catalyzes the ATP-dependent phosphorylation of sn-l,2-diacylglycerol (DAG) to phosphatidic acid. Involved in the recycling of diacylglycerol produced as a by-product during membrane-derived oligosaccharide (MDO) biosynthesis. The chain is Diacylglycerol kinase (dgkA) from Sinorhizobium sp.